Consider the following 478-residue polypeptide: Sulfate adenylyltransferase subunit 1 (478 aa).

Residues 28–244 form the tr-type G domain; that stretch reads KTMLRFLTCG…LESVDVVNAS (217 aa). The interval 37–44 is G1; sequence GSVDDGKS. Residue 37–44 participates in GTP binding; it reads GSVDDGKS. The interval 95–99 is G2; sequence GITID. Positions 116–119 are G3; the sequence is DTPG. GTP-binding positions include 116-120 and 171-174; these read DTPGH and NKMD. A G4 region spans residues 171 to 174; it reads NKMD. The tract at residues 209-211 is G5; sequence SAL.

Belongs to the TRAFAC class translation factor GTPase superfamily. Classic translation factor GTPase family. CysN/NodQ subfamily. As to quaternary structure, heterodimer composed of CysD, the smaller subunit, and CysN.

It catalyses the reaction sulfate + ATP + H(+) = adenosine 5'-phosphosulfate + diphosphate. It participates in sulfur metabolism; hydrogen sulfide biosynthesis; sulfite from sulfate: step 1/3. Functionally, with CysD forms the ATP sulfurylase (ATPS) that catalyzes the adenylation of sulfate producing adenosine 5'-phosphosulfate (APS) and diphosphate, the first enzymatic step in sulfur assimilation pathway. APS synthesis involves the formation of a high-energy phosphoric-sulfuric acid anhydride bond driven by GTP hydrolysis by CysN coupled to ATP hydrolysis by CysD. This is Sulfate adenylyltransferase subunit 1 from Yersinia enterocolitica serotype O:8 / biotype 1B (strain NCTC 13174 / 8081).